The following is a 272-amino-acid chain: L-aminoadipate-semialdehyde dehydrogenase-phosphopantetheinyl transferase (272 aa).

This sequence belongs to the P-Pant transferase superfamily. AcpS family.

The catalysed reaction is apo-[ACP] + CoA = holo-[ACP] + adenosine 3',5'-bisphosphate + H(+). Catalyzes the transfer of a 4'-phosphopantetheine moiety from coenzyme A to a serine residue of acceptor proteins, such as alpha-aminoadipate reductase. Necessary for alpha-aminoadipate reductase activity. The protein is L-aminoadipate-semialdehyde dehydrogenase-phosphopantetheinyl transferase of Saccharomyces cerevisiae (strain ATCC 204508 / S288c) (Baker's yeast).